We begin with the raw amino-acid sequence, 156 residues long: uncharacterized protein (156 aa).

3 consecutive transmembrane segments (helical) span residues Leu-42–Val-59, Ala-79–Tyr-98, and Ser-105–Ile-127.

The protein resides in the cell membrane. This is an uncharacterized protein from Archaeoglobus fulgidus (strain ATCC 49558 / DSM 4304 / JCM 9628 / NBRC 100126 / VC-16).